The sequence spans 214 residues: Probable GTP-binding protein EngB (214 aa).

Residues 40–212 (SLPEIVFVGK…KASFAQCIKH (173 aa)) form the EngB-type G domain. Residues 48-55 (GKSNVGKS), 75-79 (GRTRQ), 93-96 (DLPG), 160-163 (TKSD), and 191-193 (VSS) contribute to the GTP site. 2 residues coordinate Mg(2+): serine 55 and threonine 77.

This sequence belongs to the TRAFAC class TrmE-Era-EngA-EngB-Septin-like GTPase superfamily. EngB GTPase family. Requires Mg(2+) as cofactor.

In terms of biological role, necessary for normal cell division and for the maintenance of normal septation. The chain is Probable GTP-binding protein EngB from Rickettsia prowazekii (strain Madrid E).